Reading from the N-terminus, the 234-residue chain is uncharacterized protein (234 aa).

This is an uncharacterized protein from Escherichia coli (strain K12).